The primary structure comprises 1434 residues: DNA-directed RNA polymerase subunit beta' (1434 aa).

Zn(2+) is bound by residues cysteine 70, cysteine 72, cysteine 85, and cysteine 88. Mg(2+) contacts are provided by aspartate 460, aspartate 462, and aspartate 464. Zn(2+) is bound by residues cysteine 840, cysteine 914, cysteine 921, and cysteine 924.

Belongs to the RNA polymerase beta' chain family. As to quaternary structure, the RNAP catalytic core consists of 2 alpha, 1 beta, 1 beta' and 1 omega subunit. When a sigma factor is associated with the core the holoenzyme is formed, which can initiate transcription. The cofactor is Mg(2+). Zn(2+) is required as a cofactor.

The enzyme catalyses RNA(n) + a ribonucleoside 5'-triphosphate = RNA(n+1) + diphosphate. In terms of biological role, DNA-dependent RNA polymerase catalyzes the transcription of DNA into RNA using the four ribonucleoside triphosphates as substrates. The chain is DNA-directed RNA polymerase subunit beta' from Tolumonas auensis (strain DSM 9187 / NBRC 110442 / TA 4).